Consider the following 300-residue polypeptide: Large ribosomal subunit protein uL18 (300 aa).

The segment covering 246 to 267 (NIRSDPKRDRKPKKDVSKEPKR) has biased composition (basic and acidic residues). The interval 246-276 (NIRSDPKRDRKPKKDVSKEPKRWNAKKLTNA) is disordered.

The protein belongs to the universal ribosomal protein uL18 family. In terms of assembly, component of the large ribosomal subunit (LSU).

The protein resides in the cytoplasm. It is found in the nucleus. Its function is as follows. Component of the ribosome, a large ribonucleoprotein complex responsible for the synthesis of proteins in the cell. The small ribosomal subunit (SSU) binds messenger RNAs (mRNAs) and translates the encoded message by selecting cognate aminoacyl-transfer RNA (tRNA) molecules. The large subunit (LSU) contains the ribosomal catalytic site termed the peptidyl transferase center (PTC), which catalyzes the formation of peptide bonds, thereby polymerizing the amino acids delivered by tRNAs into a polypeptide chain. The nascent polypeptides leave the ribosome through a tunnel in the LSU and interact with protein factors that function in enzymatic processing, targeting, and the membrane insertion of nascent chains at the exit of the ribosomal tunnel. The chain is Large ribosomal subunit protein uL18 (RpL5) from Toxoptera citricida (Brown citrus aphid).